Reading from the N-terminus, the 273-residue chain is uncharacterized protein (273 aa).

This sequence belongs to the ycf23 family.

It is found in the plastid. It localises to the chloroplast. This is an uncharacterized protein from Pyropia yezoensis (Susabi-nori).